The primary structure comprises 183 residues: Dual-action ribosomal maturation protein DarP (183 aa).

This sequence belongs to the DarP family.

Its subcellular location is the cytoplasm. Functionally, member of a network of 50S ribosomal subunit biogenesis factors which assembles along the 30S-50S interface, preventing incorrect 23S rRNA structures from forming. Promotes peptidyl transferase center (PTC) maturation. In Salmonella gallinarum (strain 287/91 / NCTC 13346), this protein is Dual-action ribosomal maturation protein DarP.